A 384-amino-acid chain; its full sequence is Succinate--CoA ligase [ADP-forming] subunit beta (384 aa).

In terms of domain architecture, ATP-grasp spans 9 to 242 (KAILAQYKVP…LNEEDPLEVE (234 aa)). ATP contacts are provided by residues Lys-45, 52 to 54 (GRG), Glu-98, Leu-101, and Glu-106. Positions 197 and 211 each coordinate Mg(2+). Residues Asn-262 and 319-321 (GIL) contribute to the substrate site.

It belongs to the succinate/malate CoA ligase beta subunit family. As to quaternary structure, heterotetramer of two alpha and two beta subunits. It depends on Mg(2+) as a cofactor.

The catalysed reaction is succinate + ATP + CoA = succinyl-CoA + ADP + phosphate. It carries out the reaction GTP + succinate + CoA = succinyl-CoA + GDP + phosphate. It functions in the pathway carbohydrate metabolism; tricarboxylic acid cycle; succinate from succinyl-CoA (ligase route): step 1/1. Succinyl-CoA synthetase functions in the citric acid cycle (TCA), coupling the hydrolysis of succinyl-CoA to the synthesis of either ATP or GTP and thus represents the only step of substrate-level phosphorylation in the TCA. The beta subunit provides nucleotide specificity of the enzyme and binds the substrate succinate, while the binding sites for coenzyme A and phosphate are found in the alpha subunit. The sequence is that of Succinate--CoA ligase [ADP-forming] subunit beta from Solibacter usitatus (strain Ellin6076).